A 540-amino-acid polypeptide reads, in one-letter code: Phosphoenolpyruvate carboxykinase (ATP) (540 aa).

Position 65 (arginine 65) interacts with substrate. Lysine 87 is modified (N6-acetyllysine). Substrate-binding residues include tyrosine 207 and lysine 213. ATP-binding positions include lysine 213, histidine 232, and 248–256 (GLSGTGKTT). Residues lysine 213 and histidine 232 each coordinate Mn(2+). Aspartate 269 serves as a coordination point for Mn(2+). ATP-binding positions include glutamate 297, arginine 333, 449–450 (RI), and threonine 455. Arginine 333 is a substrate binding site. Lysine 523 is modified (N6-acetyllysine).

This sequence belongs to the phosphoenolpyruvate carboxykinase (ATP) family. As to quaternary structure, monomer. Mn(2+) serves as cofactor.

It localises to the cytoplasm. The enzyme catalyses oxaloacetate + ATP = phosphoenolpyruvate + ADP + CO2. It functions in the pathway carbohydrate biosynthesis; gluconeogenesis. Its function is as follows. Involved in the gluconeogenesis. Catalyzes the conversion of oxaloacetate (OAA) to phosphoenolpyruvate (PEP) through direct phosphoryl transfer between the nucleoside triphosphate and OAA. The protein is Phosphoenolpyruvate carboxykinase (ATP) of Escherichia coli O157:H7.